A 190-amino-acid chain; its full sequence is Pyridoxal 5'-phosphate synthase subunit PdxT (190 aa).

Gly46–Ser48 provides a ligand contact to L-glutamine. The Nucleophile role is filled by Cys78. L-glutamine is bound by residues Arg105 and Ile134–Arg135. Residues His170 and Glu172 each act as charge relay system in the active site.

This sequence belongs to the glutaminase PdxT/SNO family. In the presence of PdxS, forms a dodecamer of heterodimers. Only shows activity in the heterodimer.

The enzyme catalyses aldehydo-D-ribose 5-phosphate + D-glyceraldehyde 3-phosphate + L-glutamine = pyridoxal 5'-phosphate + L-glutamate + phosphate + 3 H2O + H(+). The catalysed reaction is L-glutamine + H2O = L-glutamate + NH4(+). It functions in the pathway cofactor biosynthesis; pyridoxal 5'-phosphate biosynthesis. In terms of biological role, catalyzes the hydrolysis of glutamine to glutamate and ammonia as part of the biosynthesis of pyridoxal 5'-phosphate. The resulting ammonia molecule is channeled to the active site of PdxS. The chain is Pyridoxal 5'-phosphate synthase subunit PdxT from Clostridium beijerinckii (strain ATCC 51743 / NCIMB 8052) (Clostridium acetobutylicum).